Here is a 384-residue protein sequence, read N- to C-terminus: Succinyl-diaminopimelate desuccinylase (384 aa).

H69 serves as a coordination point for Zn(2+). The active site involves D71. Residue D103 coordinates Zn(2+). The active-site Proton acceptor is the E137. 3 residues coordinate Zn(2+): E138, E166, and H355.

It belongs to the peptidase M20A family. DapE subfamily. In terms of assembly, homodimer. Zn(2+) serves as cofactor. The cofactor is Co(2+).

It catalyses the reaction N-succinyl-(2S,6S)-2,6-diaminopimelate + H2O = (2S,6S)-2,6-diaminopimelate + succinate. Its pathway is amino-acid biosynthesis; L-lysine biosynthesis via DAP pathway; LL-2,6-diaminopimelate from (S)-tetrahydrodipicolinate (succinylase route): step 3/3. Functionally, catalyzes the hydrolysis of N-succinyl-L,L-diaminopimelic acid (SDAP), forming succinate and LL-2,6-diaminopimelate (DAP), an intermediate involved in the bacterial biosynthesis of lysine and meso-diaminopimelic acid, an essential component of bacterial cell walls. In Rickettsia canadensis (strain McKiel), this protein is Succinyl-diaminopimelate desuccinylase.